Consider the following 597-residue polypeptide: Myrcene synthase, chloroplastic (597 aa).

Residues 1-56 (MALKLLTSLPMYNFSRVPVSSKDPILLVTSRTRNGYLARPVQCMVANKVSTSPDIL) constitute a chloroplast transit peptide. Residues arginine 310, aspartate 347, aspartate 351, arginine 488, and aspartate 491 each contribute to the (2E)-geranyl diphosphate site. Mg(2+) is bound by residues aspartate 347 and aspartate 351. The DDXXD motif signature appears at 347–351 (DDVYD). Mg(2+) contacts are provided by aspartate 491, threonine 495, and glutamate 499.

The protein belongs to the terpene synthase family. Tpsb subfamily. Requires Mg(2+) as cofactor. Mn(2+) serves as cofactor.

It localises to the plastid. The protein resides in the chloroplast. The catalysed reaction is (2E)-geranyl diphosphate = beta-myrcene + diphosphate. In terms of biological role, involved in monoterpene (C10) biosynthesis. The major product is myrcene followed by minor amounts (1.2%) of the cyclic monoterpene limonene. This Quercus ilex (Holly oak) protein is Myrcene synthase, chloroplastic.